The primary structure comprises 94 residues: Small ribosomal subunit protein bS6 (94 aa).

It belongs to the bacterial ribosomal protein bS6 family.

Its function is as follows. Binds together with bS18 to 16S ribosomal RNA. This is Small ribosomal subunit protein bS6 from Akkermansia muciniphila (strain ATCC BAA-835 / DSM 22959 / JCM 33894 / BCRC 81048 / CCUG 64013 / CIP 107961 / Muc).